The following is a 323-amino-acid chain: tRNA U34 carboxymethyltransferase (323 aa).

Carboxy-S-adenosyl-L-methionine is bound by residues K91, W105, K110, G130, 152-154 (DPS), 181-182 (IE), M196, Y200, and R315.

It belongs to the class I-like SAM-binding methyltransferase superfamily. CmoB family. In terms of assembly, homotetramer.

The enzyme catalyses carboxy-S-adenosyl-L-methionine + 5-hydroxyuridine(34) in tRNA = 5-carboxymethoxyuridine(34) in tRNA + S-adenosyl-L-homocysteine + H(+). Catalyzes carboxymethyl transfer from carboxy-S-adenosyl-L-methionine (Cx-SAM) to 5-hydroxyuridine (ho5U) to form 5-carboxymethoxyuridine (cmo5U) at position 34 in tRNAs. This is tRNA U34 carboxymethyltransferase from Vibrio parahaemolyticus serotype O3:K6 (strain RIMD 2210633).